Reading from the N-terminus, the 572-residue chain is 2-isopropylmalate synthase (572 aa).

The 275-residue stretch at 39-313 (PVWMSTDLRD…HPGLDFSRIN (275 aa)) folds into the Pyruvate carboxyltransferase domain. 4 residues coordinate Mg(2+): D48, H252, H254, and N288. The tract at residues 445-572 (VAAPYAYVEH…GVGRQVAATR (128 aa)) is regulatory domain.

Belongs to the alpha-IPM synthase/homocitrate synthase family. LeuA type 2 subfamily. In terms of assembly, homodimer. Requires Mg(2+) as cofactor.

It localises to the cytoplasm. It carries out the reaction 3-methyl-2-oxobutanoate + acetyl-CoA + H2O = (2S)-2-isopropylmalate + CoA + H(+). Its pathway is amino-acid biosynthesis; L-leucine biosynthesis; L-leucine from 3-methyl-2-oxobutanoate: step 1/4. In terms of biological role, catalyzes the condensation of the acetyl group of acetyl-CoA with 3-methyl-2-oxobutanoate (2-ketoisovalerate) to form 3-carboxy-3-hydroxy-4-methylpentanoate (2-isopropylmalate). The chain is 2-isopropylmalate synthase from Azoarcus sp. (strain BH72).